The primary structure comprises 134 residues: Fluoride-specific ion channel FluC (134 aa).

The next 4 helical transmembrane spans lie at 7–27 (LAVA…TIMA), 38–58 (GTLL…IVLV), 69–89 (LFLF…AAES), and 110–130 (VGSL…LLGH). Na(+) is bound by residues G77 and T80.

It belongs to the fluoride channel Fluc/FEX (TC 1.A.43) family.

It localises to the cell inner membrane. The enzyme catalyses fluoride(in) = fluoride(out). Its activity is regulated as follows. Na(+) is not transported, but it plays an essential structural role and its presence is essential for fluoride channel function. In terms of biological role, fluoride-specific ion channel. Important for reducing fluoride concentration in the cell, thus reducing its toxicity. The chain is Fluoride-specific ion channel FluC from Legionella pneumophila (strain Lens).